Reading from the N-terminus, the 562-residue chain is Formate--tetrahydrofolate ligase (562 aa).

71–78 contributes to the ATP binding site; the sequence is TPAGEGKS.

The protein belongs to the formate--tetrahydrofolate ligase family.

It catalyses the reaction (6S)-5,6,7,8-tetrahydrofolate + formate + ATP = (6R)-10-formyltetrahydrofolate + ADP + phosphate. Its pathway is one-carbon metabolism; tetrahydrofolate interconversion. The chain is Formate--tetrahydrofolate ligase from Bacillus cereus (strain ATCC 10987 / NRS 248).